A 631-amino-acid polypeptide reads, in one-letter code: MBT domain-containing protein 1 (631 aa).

Residues 1–31 (MFDGYDSCSEDTSSSSSSEESEEEVAPLPSN) form a disordered region. The FCS-type zinc-finger motif lies at 45–80 (PDGKSGMATCEMCGMVGVRDAFYSKTKRFCSVSCSR). Zn(2+)-binding residues include Cys-54, Cys-57, Cys-74, and Cys-78. N6-acetyllysine is present on Lys-115. MBT repeat units follow at residues 144–248 (FSWG…LVPP), 256–353 (TNWK…IGHR), 354–459 (FKRS…LTPP), and 467–563 (FKWF…LQPP). A disordered region spans residues 563–631 (PASQSSRESQ…SATVYIKQEP (69 aa)). Over residues 564 to 576 (ASQSSRESQSASS) the composition is skewed to low complexity. The segment covering 577–593 (KQKKKAKSQQYKGHKKM) has biased composition (basic residues).

In terms of assembly, monomer. Component of the NuA4 histone acetyltransferase complex. Interacts with EPC1; interaction is direct and promotes recruitment of MBTD1 into the NuA4 histone acetyltransferase complex.

The protein resides in the nucleus. Its subcellular location is the chromosome. In terms of biological role, chromatin reader component of the NuA4 histone acetyltransferase complex, a multiprotein complex involved in transcriptional activation of select genes principally by acetylation of nucleosomal histones H4 and H2A. The NuA4 complex plays a direct role in repair of DNA double-strand breaks (DSBs) by promoting homologous recombination (HR). MBTD1 specifically recognizes and binds monomethylated and dimethylated 'Lys-20' on histone H4 (H4K20me1 and H4K20me2, respectively). In the NuA4 complex, MBTD1 promotes recruitment of the complex to H4K20me marks by competing with TP53BP1 for binding to H4K20me. Following recruitment to H4K20me at DNA breaks, the NuA4 complex catalyzes acetylation of 'Lys-15' on histone H2A (H2AK15), blocking the ubiquitination mark required for TP53BP1 localization at DNA breaks, thereby promoting homologous recombination (HR). The sequence is that of MBT domain-containing protein 1 from Mus musculus (Mouse).